A 105-amino-acid chain; its full sequence is MIASKFGIGQQVRHRLHGYLGVVIDIDPEYSLEPPAPDEVANNDTLRLSPWYHVVIEDDEGQPVHTYLAEAQLTYEDMDAHPEQPSLDELAASIRHQLQAPRLRN.

Belongs to the HspQ family.

The protein resides in the cytoplasm. Functionally, involved in the degradation of certain denaturated proteins, including DnaA, during heat shock stress. The protein is Heat shock protein HspQ of Yersinia enterocolitica serotype O:8 / biotype 1B (strain NCTC 13174 / 8081).